We begin with the raw amino-acid sequence, 101 residues long: Urease subunit beta (101 aa).

It belongs to the urease beta subunit family. In terms of assembly, heterotrimer of UreA (gamma), UreB (beta) and UreC (alpha) subunits. Three heterotrimers associate to form the active enzyme.

The protein localises to the cytoplasm. It catalyses the reaction urea + 2 H2O + H(+) = hydrogencarbonate + 2 NH4(+). It participates in nitrogen metabolism; urea degradation; CO(2) and NH(3) from urea (urease route): step 1/1. This chain is Urease subunit beta, found in Burkholderia ambifaria (strain ATCC BAA-244 / DSM 16087 / CCUG 44356 / LMG 19182 / AMMD) (Burkholderia cepacia (strain AMMD)).